Consider the following 57-residue polypeptide: Large ribosomal subunit protein bL32 (57 aa).

The protein belongs to the bacterial ribosomal protein bL32 family.

This chain is Large ribosomal subunit protein bL32, found in Bacillus licheniformis (strain ATCC 14580 / DSM 13 / JCM 2505 / CCUG 7422 / NBRC 12200 / NCIMB 9375 / NCTC 10341 / NRRL NRS-1264 / Gibson 46).